Consider the following 607-residue polypeptide: Guanine nucleotide-binding protein-like 1 (607 aa).

Residues 1–14 are compositionally biased toward basic residues; that stretch reads MPRKKPFSVKQKKK. A disordered region spans residues 1 to 81; that stretch reads MPRKKPFSVK…GPRGYDPNRY (81 aa). Positions 15–26 are enriched in basic and acidic residues; the sequence is QLQDKRERKRGL. Ser32, Ser33, and Ser34 each carry phosphoserine. Thr48 and Thr50 each carry phosphothreonine. Residues Ser51 and Ser68 each carry the phosphoserine modification. In terms of domain architecture, CP-type G spans 178-418; sequence WRQLWRVLEM…LCDCPGLIFP (241 aa). Position 225–228 (225–228) interacts with GTP; that stretch reads NKVD. Ser324 is modified (phosphoserine). GTP is bound by residues 367–374 and 411–415; these read GFPNVGKS and DCPGL. The interval 544–607 is disordered; the sequence is GRVGPAGDEE…PYALLGEGEC (64 aa). Residues 550–585 are compositionally biased toward acidic residues; sequence GDEEEEEEEELSSSCEEEGEEDRDADEEGEGDEDTP. A phosphoserine mark is found at Ser561, Ser562, and Ser563.

Belongs to the TRAFAC class YlqF/YawG GTPase family.

Its function is as follows. Possible regulatory or functional link with the histocompatibility cluster. This Rattus norvegicus (Rat) protein is Guanine nucleotide-binding protein-like 1 (Gnl1).